Reading from the N-terminus, the 439-residue chain is tRNA modification GTPase MnmE (439 aa).

(6S)-5-formyl-5,6,7,8-tetrahydrofolate contacts are provided by Arg26, Glu88, and Arg127. A TrmE-type G domain is found at Gly220–Ile367. Asn230 contributes to the K(+) binding site. GTP-binding positions include Asn230–Ser235, Thr249–Thr255, and Asp274–Gly277. Ser234 contributes to the Mg(2+) binding site. K(+) is bound by residues Thr249, Ile251, and Thr254. Thr255 is a binding site for Mg(2+). Lys439 is a (6S)-5-formyl-5,6,7,8-tetrahydrofolate binding site.

The protein belongs to the TRAFAC class TrmE-Era-EngA-EngB-Septin-like GTPase superfamily. TrmE GTPase family. Homodimer. Heterotetramer of two MnmE and two MnmG subunits. K(+) is required as a cofactor.

It is found in the cytoplasm. Exhibits a very high intrinsic GTPase hydrolysis rate. Involved in the addition of a carboxymethylaminomethyl (cmnm) group at the wobble position (U34) of certain tRNAs, forming tRNA-cmnm(5)s(2)U34. The chain is tRNA modification GTPase MnmE from Deinococcus geothermalis (strain DSM 11300 / CIP 105573 / AG-3a).